Reading from the N-terminus, the 220-residue chain is MFTVALAKGALLQESVSMFSDVGLDFSAVLDDSNRQLMVPSACGRAKALLVRNSDVPVYVSYGQAQLGIVGFDVLQEQKLQVSNLVDLGFGECHMSVAVKSSSGYLSASDLPPNCRVASKFTNCAKHFFDQIDLPVQLVHLSGSVELGPITGMAEAIVDLVATGRTLRDNGLVEIEELFKSSARLVGHPLSLRLDKGPLQEIIDSIQIQSQTNLLSDGKK.

This sequence belongs to the ATP phosphoribosyltransferase family. Short subfamily. In terms of assembly, heteromultimer composed of HisG and HisZ subunits.

It localises to the cytoplasm. The catalysed reaction is 1-(5-phospho-beta-D-ribosyl)-ATP + diphosphate = 5-phospho-alpha-D-ribose 1-diphosphate + ATP. It functions in the pathway amino-acid biosynthesis; L-histidine biosynthesis; L-histidine from 5-phospho-alpha-D-ribose 1-diphosphate: step 1/9. In terms of biological role, catalyzes the condensation of ATP and 5-phosphoribose 1-diphosphate to form N'-(5'-phosphoribosyl)-ATP (PR-ATP). Has a crucial role in the pathway because the rate of histidine biosynthesis seems to be controlled primarily by regulation of HisG enzymatic activity. The protein is ATP phosphoribosyltransferase of Prochlorococcus marinus (strain NATL1A).